The following is a 545-amino-acid chain: Chaperonin GroEL (545 aa).

Residues 29–32 (TLGP), Lys-50, 86–90 (DGTTT), Gly-415, and Asp-495 contribute to the ATP site.

This sequence belongs to the chaperonin (HSP60) family. Forms a cylinder of 14 subunits composed of two heptameric rings stacked back-to-back. Interacts with the co-chaperonin GroES.

It is found in the cytoplasm. It catalyses the reaction ATP + H2O + a folded polypeptide = ADP + phosphate + an unfolded polypeptide.. Together with its co-chaperonin GroES, plays an essential role in assisting protein folding. The GroEL-GroES system forms a nano-cage that allows encapsulation of the non-native substrate proteins and provides a physical environment optimized to promote and accelerate protein folding. The sequence is that of Chaperonin GroEL from Phocaeicola vulgatus (strain ATCC 8482 / DSM 1447 / JCM 5826 / CCUG 4940 / NBRC 14291 / NCTC 11154) (Bacteroides vulgatus).